The sequence spans 90 residues: Bombyxin D-1 (90 aa).

The signal sequence occupies residues 1–18; that stretch reads MKLLGFFLSWVSVCAIVS. Intrachain disulfides connect C27-C77, C39-C90, and C76-C81. A propeptide spans 48 to 68 (c peptide like); the sequence is SVAHYAGYGWPLLPSLSEERG.

Belongs to the insulin family. Heterodimer of a B chain and an A chain linked by two disulfide bonds.

The protein localises to the secreted. Functionally, brain peptide responsible for activation of prothoracic glands to produce ecdysone in insects. This chain is Bombyxin D-1 (BBXD1), found in Bombyx mori (Silk moth).